Here is a 573-residue protein sequence, read N- to C-terminus: Proton-coupled zinc antiporter SLC30A9, mitochondrial (573 aa).

Residues 66–108 form a disordered region; sequence NCSTSGSGKDGSPTRPEEPKTTEKAQAAQPAAKGAGSKPQGLT. Residues 90-104 show a composition bias toward low complexity; that stretch reads AQAAQPAAKGAGSKP. The next 5 helical transmembrane spans lie at 244–264, 319–339, 347–367, 397–417, and 429–449; these read VVMV…LAWV, GVGI…MGLL, LLWA…TLLV, VVLL…GCMG, and SLGS…LIYT. Residues 467–471 carry the LXXLL motif motif; that stretch reads LTEFL.

This sequence belongs to the cation diffusion facilitator (CDF) transporter (TC 2.A.4) family. SLC30A subfamily.

Its subcellular location is the mitochondrion membrane. The protein resides in the nucleus. It is found in the endoplasmic reticulum. The catalysed reaction is Zn(2+)(in) + 2 H(+)(out) = Zn(2+)(out) + 2 H(+)(in). Functionally, mitochondrial proton-coupled zinc ion antiporter mediating the export of zinc from the mitochondria and involved in zinc homeostasis, zinc mobilization as well as mitochondrial morphology and health. In nucleus, may function as a secondary coactivator for nuclear receptors. The chain is Proton-coupled zinc antiporter SLC30A9, mitochondrial (slc30a9) from Danio rerio (Zebrafish).